The chain runs to 294 residues: Ribosomal RNA small subunit methyltransferase H (294 aa).

Residues 37–39 (GGH), aspartate 58, leucine 93, aspartate 105, and glutamine 112 each bind S-adenosyl-L-methionine.

This sequence belongs to the methyltransferase superfamily. RsmH family.

It localises to the cytoplasm. It catalyses the reaction cytidine(1402) in 16S rRNA + S-adenosyl-L-methionine = N(4)-methylcytidine(1402) in 16S rRNA + S-adenosyl-L-homocysteine + H(+). In terms of biological role, specifically methylates the N4 position of cytidine in position 1402 (C1402) of 16S rRNA. The chain is Ribosomal RNA small subunit methyltransferase H from Fervidobacterium nodosum (strain ATCC 35602 / DSM 5306 / Rt17-B1).